The sequence spans 256 residues: Thiazole synthase (256 aa).

Lys95 functions as the Schiff-base intermediate with DXP in the catalytic mechanism. 1-deoxy-D-xylulose 5-phosphate-binding positions include Gly156, 182–183 (AG), and 204–205 (NT).

It belongs to the ThiG family. Homotetramer. Forms heterodimers with either ThiH or ThiS.

It is found in the cytoplasm. It catalyses the reaction [ThiS sulfur-carrier protein]-C-terminal-Gly-aminoethanethioate + 2-iminoacetate + 1-deoxy-D-xylulose 5-phosphate = [ThiS sulfur-carrier protein]-C-terminal Gly-Gly + 2-[(2R,5Z)-2-carboxy-4-methylthiazol-5(2H)-ylidene]ethyl phosphate + 2 H2O + H(+). The protein operates within cofactor biosynthesis; thiamine diphosphate biosynthesis. Its function is as follows. Catalyzes the rearrangement of 1-deoxy-D-xylulose 5-phosphate (DXP) to produce the thiazole phosphate moiety of thiamine. Sulfur is provided by the thiocarboxylate moiety of the carrier protein ThiS. In vitro, sulfur can be provided by H(2)S. This Shigella dysenteriae serotype 1 (strain Sd197) protein is Thiazole synthase.